Reading from the N-terminus, the 555-residue chain is Benzoyl-CoA-dihydrodiol lyase (555 aa).

This sequence belongs to the benzoyl-CoA oxygenase component C family. As to quaternary structure, homodimer.

It carries out the reaction 2,3-epoxy-2,3-dihydrobenzoyl-CoA + 2 H2O = (3Z)-6-oxohex-3-enoyl-CoA + formate + H(+). Functionally, catalyzes the ring opening of 2,3-epoxy-2,3-dihydroxybenzoyl-CoA to form 3,4-didehydroadipyl-CoA semialdehyde. In Aromatoleum evansii (Azoarcus evansii), this protein is Benzoyl-CoA-dihydrodiol lyase (boxC).